Reading from the N-terminus, the 184-residue chain is Holliday junction branch migration complex subunit RuvA (184 aa).

Positions 1 to 64 (MIKAIEGIIT…EDANLLYGFI (64 aa)) are domain I. The domain II stretch occupies residues 65 to 137 (KESEQRIFEM…LSDAKFGEIN (73 aa)). Position 137 (asparagine 137) is a region of interest, flexible linker. The domain III stretch occupies residues 138–184 (SMPSYQNEAFMALESLGFKRDRISKVLNECSSNDTASLIKEALKKLA).

This sequence belongs to the RuvA family. As to quaternary structure, homotetramer. Forms an RuvA(8)-RuvB(12)-Holliday junction (HJ) complex. HJ DNA is sandwiched between 2 RuvA tetramers; dsDNA enters through RuvA and exits via RuvB. An RuvB hexamer assembles on each DNA strand where it exits the tetramer. Each RuvB hexamer is contacted by two RuvA subunits (via domain III) on 2 adjacent RuvB subunits; this complex drives branch migration. In the full resolvosome a probable DNA-RuvA(4)-RuvB(12)-RuvC(2) complex forms which resolves the HJ.

It localises to the cytoplasm. In terms of biological role, the RuvA-RuvB-RuvC complex processes Holliday junction (HJ) DNA during genetic recombination and DNA repair, while the RuvA-RuvB complex plays an important role in the rescue of blocked DNA replication forks via replication fork reversal (RFR). RuvA specifically binds to HJ cruciform DNA, conferring on it an open structure. The RuvB hexamer acts as an ATP-dependent pump, pulling dsDNA into and through the RuvAB complex. HJ branch migration allows RuvC to scan DNA until it finds its consensus sequence, where it cleaves and resolves the cruciform DNA. The chain is Holliday junction branch migration complex subunit RuvA from Campylobacter fetus subsp. fetus (strain 82-40).